A 155-amino-acid polypeptide reads, in one-letter code: Ribosome maturation factor RimP (155 aa).

This sequence belongs to the RimP family.

The protein resides in the cytoplasm. Its function is as follows. Required for maturation of 30S ribosomal subunits. The sequence is that of Ribosome maturation factor RimP from Bacteroides fragilis (strain ATCC 25285 / DSM 2151 / CCUG 4856 / JCM 11019 / LMG 10263 / NCTC 9343 / Onslow / VPI 2553 / EN-2).